A 130-amino-acid polypeptide reads, in one-letter code: MIGNWNYGTGRRKSAVARVFIKSGKGDIVVNGKPIKEYFARETSLMIVRQPLELTAHAETFDIKVNVTGGGETGQAGAVRHGITRALIDYDATLKSALSKAGYVTRDAREVERKKVGFHKARRRKQFSKR.

The protein belongs to the universal ribosomal protein uS9 family.

In Cupriavidus taiwanensis (strain DSM 17343 / BCRC 17206 / CCUG 44338 / CIP 107171 / LMG 19424 / R1) (Ralstonia taiwanensis (strain LMG 19424)), this protein is Small ribosomal subunit protein uS9.